We begin with the raw amino-acid sequence, 102 residues long: Small ribosomal subunit protein uS10 (102 aa).

It belongs to the universal ribosomal protein uS10 family. In terms of assembly, part of the 30S ribosomal subunit.

In terms of biological role, involved in the binding of tRNA to the ribosomes. The protein is Small ribosomal subunit protein uS10 of Bartonella tribocorum (strain CIP 105476 / IBS 506).